Reading from the N-terminus, the 260-residue chain is MNSDTLNIGNKIFQSRLIVGSGKYKDFKTTYEATMASEAEMITVAVRRVNITNPKEENLLDYFKGSSVQFLPNSAGCTTAEETITLFRLTREATGIDFIKLEIIGDTQKTLYPDVMETLKACEVLAKDGFTVLAYTNDDPIMARRLEEAGASAIMPLAAPIGSGLGIQNRYNVVFIKEAIKVPLIVDAGVGCASDAAIAMELGADAVLTNTAIAQAQNPILMASAMRDAVRAGRQSYLAGRIPKKPYASASSPTDGMARF.

The active-site Schiff-base intermediate with DXP is the Lys-100. 1-deoxy-D-xylulose 5-phosphate is bound by residues Gly-162, 188–189 (AG), and 210–211 (NT).

Belongs to the ThiG family. Homotetramer. Forms heterodimers with either ThiH or ThiS.

Its subcellular location is the cytoplasm. The enzyme catalyses [ThiS sulfur-carrier protein]-C-terminal-Gly-aminoethanethioate + 2-iminoacetate + 1-deoxy-D-xylulose 5-phosphate = [ThiS sulfur-carrier protein]-C-terminal Gly-Gly + 2-[(2R,5Z)-2-carboxy-4-methylthiazol-5(2H)-ylidene]ethyl phosphate + 2 H2O + H(+). Its pathway is cofactor biosynthesis; thiamine diphosphate biosynthesis. Functionally, catalyzes the rearrangement of 1-deoxy-D-xylulose 5-phosphate (DXP) to produce the thiazole phosphate moiety of thiamine. Sulfur is provided by the thiocarboxylate moiety of the carrier protein ThiS. In vitro, sulfur can be provided by H(2)S. The protein is Thiazole synthase of Wolinella succinogenes (strain ATCC 29543 / DSM 1740 / CCUG 13145 / JCM 31913 / LMG 7466 / NCTC 11488 / FDC 602W) (Vibrio succinogenes).